A 295-amino-acid chain; its full sequence is Nucleotide-binding protein BH3569 (295 aa).

14-21 (GMSGAGKT) is a binding site for ATP. 65 to 68 (DLRG) serves as a coordination point for GTP.

This sequence belongs to the RapZ-like family.

Functionally, displays ATPase and GTPase activities. This is Nucleotide-binding protein BH3569 from Halalkalibacterium halodurans (strain ATCC BAA-125 / DSM 18197 / FERM 7344 / JCM 9153 / C-125) (Bacillus halodurans).